The sequence spans 152 residues: uncharacterized protein (152 aa).

A run of 4 helical transmembrane segments spans residues 2–22 (ENLI…LSFL), 26–46 (FITF…HLIE), 92–112 (VVPI…FILL), and 128–148 (YIIT…YFLK).

The protein localises to the membrane. This is an uncharacterized protein from Acanthamoeba polyphaga mimivirus (APMV).